A 209-amino-acid polypeptide reads, in one-letter code: Chaperone protein TorD (209 aa).

This sequence belongs to the TorD/DmsD family. TorD subfamily.

The protein localises to the cytoplasm. Functionally, involved in the biogenesis of TorA. Acts on TorA before the insertion of the molybdenum cofactor and, as a result, probably favors a conformation of the apoenzyme that is competent for acquiring the cofactor. The protein is Chaperone protein TorD of Shewanella sp. (strain ANA-3).